The chain runs to 232 residues: Protein lin-7 homolog A (232 aa).

Residues 14–28 (MATLTVVQPLTLDRD) carry the Kinase interacting site motif. Residues 25–80 (LDRDVARAIELLEKLQESGEVPVHKLQSLKKVLQSEFCTAIREVYQYMHETITVNG) enclose the L27 domain. In terms of domain architecture, PDZ spans 108 to 190 (VVELPKTDEG…SVKLVVRYTP (83 aa)).

It belongs to the lin-7 family. As to quaternary structure, forms a complex with CASK and CASKIN1. Component of the brain-specific heterotrimeric complex (LIN-10-LIN-2-LIN-7 complex) composed of at least APBA1, CASK, and LIN7, which associates with the motor protein KIF17 to transport vesicles along microtubules. Can also interact with other modular proteins containing protein-protein interaction domains like PALS1, PALS2, MPP7, DLG1, DLG2 and DLG3 through its L27 domain. Interacts with DLG4 and GRIN2B as well as CDH1 and CTNNB1, the channels KCNJ12/Kir2.2, KCNJ4/Kir2.3 and probably KCNJ2/Kir2.1 and SLC6A12/BGT-1 via its PDZ domain. The association of LIN7A with cadherin and beta-catenin is calcium-dependent, occurs at synaptic junctions and requires the actin cytoskeleton. Interacts with EGFR, ERBB2, ERBB3 and ERBB4 with both PDZ and KID domains. Associates with KIF17 via APBA1. Interacts with HTR4. Forms a tripartite complex composed of DLG1, MPP7 and LIN7 (LIN7A or LIN7C). Interacts with MARCHF11. In terms of tissue distribution, ubiquitously expressed in brain and detected in lung, liver and testis (at protein level). Expression was detected only in brain.

It localises to the cell membrane. It is found in the basolateral cell membrane. The protein localises to the cell junction. Its subcellular location is the postsynaptic density membrane. The protein resides in the tight junction. Its function is as follows. Plays a role in establishing and maintaining the asymmetric distribution of channels and receptors at the plasma membrane of polarized cells. Forms membrane-associated multiprotein complexes that may regulate delivery and recycling of proteins to the correct membrane domains. The tripartite complex composed of LIN7 (LIN7A, LIN7B or LIN7C), CASK and APBA1 associates with the motor protein KIF17 to transport vesicles containing N-methyl-D-aspartate (NMDA) receptor subunit NR2B along microtubules. This complex may have the potential to couple synaptic vesicle exocytosis to cell adhesion in brain. Ensures the proper localization of GRIN2B (subunit 2B of the NMDA receptor) to neuronal postsynaptic density and may function in localizing synaptic vesicles at synapses where it is recruited by beta-catenin and cadherin. Required to localize Kir2 channels, GABA transporter (SLC6A12) and EGFR/ERBB1, ERBB2, ERBB3 and ERBB4 to the basolateral membrane of epithelial cells. This Rattus norvegicus (Rat) protein is Protein lin-7 homolog A (Lin7a).